The sequence spans 481 residues: Aspartyl/glutamyl-tRNA(Asn/Gln) amidotransferase subunit B (481 aa).

This sequence belongs to the GatB/GatE family. GatB subfamily. In terms of assembly, heterotrimer of A, B and C subunits.

It catalyses the reaction L-glutamyl-tRNA(Gln) + L-glutamine + ATP + H2O = L-glutaminyl-tRNA(Gln) + L-glutamate + ADP + phosphate + H(+). The catalysed reaction is L-aspartyl-tRNA(Asn) + L-glutamine + ATP + H2O = L-asparaginyl-tRNA(Asn) + L-glutamate + ADP + phosphate + 2 H(+). Its function is as follows. Allows the formation of correctly charged Asn-tRNA(Asn) or Gln-tRNA(Gln) through the transamidation of misacylated Asp-tRNA(Asn) or Glu-tRNA(Gln) in organisms which lack either or both of asparaginyl-tRNA or glutaminyl-tRNA synthetases. The reaction takes place in the presence of glutamine and ATP through an activated phospho-Asp-tRNA(Asn) or phospho-Glu-tRNA(Gln). The chain is Aspartyl/glutamyl-tRNA(Asn/Gln) amidotransferase subunit B from Pseudomonas putida (strain ATCC 47054 / DSM 6125 / CFBP 8728 / NCIMB 11950 / KT2440).